The primary structure comprises 359 residues: N-acetylhexosamine 1-kinase (359 aa).

The region spanning 21-359 is the Protein kinase domain; that stretch reads VTGIEPYGDG…IVADIMEAAR (339 aa).

The protein belongs to the protein kinase superfamily. The cofactor is Mg(2+).

The catalysed reaction is N-acetyl-D-hexosamine + ATP = N-acetyl-alpha-D-hexosamine 1-phosphate + ADP + H(+). Phosphorylates both N-acetylglucosamine (GlcNAc) and N-acetylgalactosamine (GalNAc) at similar rates. Involved in the lacto-N-biose I/galacto-N-biose (LNB/GNB) degradation pathway, which is important for host intestinal colonization by bifidobacteria. Also accepts GTP and ITP as phosphate donors. In vitro, can phosphorylate several GlcNAc and GalNAc derivatives. The protein is N-acetylhexosamine 1-kinase (nahK) of Bifidobacterium longum subsp. longum (strain ATCC 15707 / DSM 20219 / JCM 1217 / NCTC 11818 / E194b).